Consider the following 123-residue polypeptide: Protein lgg-1 (123 aa).

Glycine 116 carries Phosphatidylethanolamine amidated glycine lipidation. The propeptide at glycine 117–glutamate 123 is removed in mature form.

It belongs to the ATG8 family. As to quaternary structure, interacts with sepa-1 (via the LIR motifs); the interaction is direct. Interacts with allo-1 (via the LIR motif). Interacts with sqst-1 (via the LIR motifs); the interaction is direct. Both lipidated and unlipidated forms interact with epg-7 (via the LIR motif); the interaction is direct. Interacts with epg-2 (via the LIR motifs); the interaction is direct. Interacts with atg-13; the interaction is direct. Interacts with unc-51 (via the LIR motif); the interaction is direct. Interacts with atg-7; the interaction is direct. Interacts with atg-3. The interaction with atg-7 and atg-3 may be required for the lipidation of lgg-1. Cleaved by atg-4.1 and/or atg-4.2, after Gly-116 to form a thioester bond with 'Cys-523' of atg-7 (E1-like activating enzyme) before being transferred to 'Cys-255' of atg-3 (E2 conjugating enzyme), in order to be amidated with phosphatidylethanolamine. This lipid modification anchors lgg-1 to membranes and can be reversed by atg-4.2, releasing soluble lgg-1. C-terminal cleavage is essential for autophagosome initiation and biogenesis. Lipidation is not essential for autophagy or development but the lipidated form is involved in cargo recognition and autophagosome biogenesis. Lipidation regulates lgg-2-positive autophagosome formation. Expressed in PLML touch receptor neuron and in the ventral nerve cord. Expressed in AIY interneurons.

It is found in the preautophagosomal structure. The protein resides in the cytoplasmic vesicle. It localises to the autophagosome. The protein localises to the autophagosome membrane. Its subcellular location is the lysosome lumen. It is found in the mitochondrion. The protein resides in the cytoplasm. It localises to the phagosome membrane. The protein localises to the cell membrane. Its subcellular location is the cell projection. It is found in the dendrite. The protein resides in the perikaryon. Ubiquitin-like modifier involved in the formation of autophagosomal vacuoles (autophagosomes). When lipidated mediates tethering between adjacent membranes and stimulates membrane fusion during autophagy. Recruits lipidated-lgg-2 to maturing autophagosomes. Acts in the aggrephagy pathway, which is the macroautophagic degradation of ubiquitinated protein aggregates, and preferentially interacts with autophagy proteins and substrates containing LIR motifs to mediate autophagosome formation and protein aggregate degradation. In particular, binds to components of the unc-51-atg-13 complex to regulate autophagosome formation and cargo sequestration. Required for the degradation of specific sepa-1- and sqst-1-containing protein aggregates during embryogenesis. Involved in allophagy, which is an autophagic process in which paternal mitochondria and organelles are degraded during fertilization, and moreover is required for the formation of lgg-2-positive allophagic autophagosomes in embryos. Involved in the clearance of apoptotic cells by promoting the delivery of engulfed apoptotic cells to the lysosome. Plays a role in the distribution and clearance of germ cell specific P-granules from somatic cells. Also plays a role in the autophagy-mediated degradation of ribosomal RNA and ribosomal proteins in lysosomes. Involved in xenophagy, the autophagy-mediated degradation of pathogens and pathogen products, such as toxins. Required for normal survival when exposed to pathogenic bacteria S.typhimurium probably by promoting autophagic degradation of intracellular S.typhimurium. Also plays a role in membrane-pore repair. Plays a role in mitophagy. Essential for dauer development and longevity, including longevity in response to moderate, short-term heat shock, also known as a hormetic heat shock. The chain is Protein lgg-1 from Caenorhabditis elegans.